A 260-amino-acid polypeptide reads, in one-letter code: Triosephosphate isomerase (260 aa).

11-13 (NWK) contributes to the substrate binding site. Catalysis depends on H103, which acts as the Electrophile. E175 (proton acceptor) is an active-site residue. Residues G181, S220, and 241–242 (GG) each bind substrate.

The protein belongs to the triosephosphate isomerase family. Homodimer.

Its subcellular location is the cytoplasm. The enzyme catalyses D-glyceraldehyde 3-phosphate = dihydroxyacetone phosphate. The protein operates within carbohydrate biosynthesis; gluconeogenesis. It participates in carbohydrate degradation; glycolysis; D-glyceraldehyde 3-phosphate from glycerone phosphate: step 1/1. Its function is as follows. Involved in the gluconeogenesis. Catalyzes stereospecifically the conversion of dihydroxyacetone phosphate (DHAP) to D-glyceraldehyde-3-phosphate (G3P). The chain is Triosephosphate isomerase from Shewanella frigidimarina (strain NCIMB 400).